Reading from the N-terminus, the 467-residue chain is UDP-N-acetylmuramate--L-alanine ligase (467 aa).

Residue 114-120 (GTHGKTT) participates in ATP binding.

Belongs to the MurCDEF family.

The protein resides in the cytoplasm. It catalyses the reaction UDP-N-acetyl-alpha-D-muramate + L-alanine + ATP = UDP-N-acetyl-alpha-D-muramoyl-L-alanine + ADP + phosphate + H(+). The protein operates within cell wall biogenesis; peptidoglycan biosynthesis. Its function is as follows. Cell wall formation. In Bradyrhizobium sp. (strain BTAi1 / ATCC BAA-1182), this protein is UDP-N-acetylmuramate--L-alanine ligase.